The chain runs to 541 residues: Beta-hexosaminidase subunit A2 (541 aa).

An N-terminal signal peptide occupies residues 1 to 21; sequence MINKFLTIFLIFSIVIIKVLS. The active-site Proton donor is Glu-314. Asn-322, Asn-336, Asn-356, Asn-435, and Asn-483 each carry an N-linked (GlcNAc...) asparagine glycan.

This sequence belongs to the glycosyl hydrolase 20 family.

The protein localises to the lysosome. It carries out the reaction Hydrolysis of terminal non-reducing N-acetyl-D-hexosamine residues in N-acetyl-beta-D-hexosaminides.. In terms of biological role, responsible for the degradation of GM2 gangliosides, and a variety of other molecules containing terminal N-acetyl hexosamines. The polypeptide is Beta-hexosaminidase subunit A2 (hexa2) (Dictyostelium discoideum (Social amoeba)).